Reading from the N-terminus, the 433-residue chain is Adenylosuccinate synthetase (433 aa).

Residues 13-19 and 41-43 each bind GTP; these read GDEGKGK and GHT. Asp14 (proton acceptor) is an active-site residue. Mg(2+) is bound by residues Asp14 and Gly41. Residues 14-17, 39-42, Thr130, Arg144, Gln225, Thr240, and Arg304 each bind IMP; these read DEGK and NAGH. The active-site Proton donor is His42. 300–306 is a substrate binding site; sequence STTGRKR. GTP is bound by residues Arg306, 332–334, and 414–416; these read KLD and STG.

Belongs to the adenylosuccinate synthetase family. Homodimer. It depends on Mg(2+) as a cofactor.

It localises to the cytoplasm. The enzyme catalyses IMP + L-aspartate + GTP = N(6)-(1,2-dicarboxyethyl)-AMP + GDP + phosphate + 2 H(+). Its pathway is purine metabolism; AMP biosynthesis via de novo pathway; AMP from IMP: step 1/2. Functionally, plays an important role in the de novo pathway of purine nucleotide biosynthesis. Catalyzes the first committed step in the biosynthesis of AMP from IMP. This is Adenylosuccinate synthetase from Buchnera aphidicola subsp. Acyrthosiphon pisum (strain Tuc7).